A 398-amino-acid polypeptide reads, in one-letter code: MNKEMTHKKSNGIIEWIDYRLPIFSFFKHFSYYQTPKNLNYLWTLGSIAGIALVIQIITGVILAMHYTPHVDHAFESVERIMRNVNYGWLLRYTHTVGASMFFATIYLHIARGLYYGSYKTPRELLWHIGIIIFLIMMATAFMGYVLPWGQMSYWSATVITNLFSAIPLIGEPIVIWLCGGFSVDNPTLNRFFSLHYLFPFIIVALVILHLLALHQHGSNNPKGIDVKSTKDTIPFHPYYTVKDFVGFGVYFIIFAYFIFYEPNYLGHPDNYIPANPLVTPAHIVPEWYFRPFYAILRAVPSKLAGVFLMFGSIFVLFLLPWLDTSKIRSGNYRPIYRIAFWIFMADCLFLGYLGSKPPAEPYIIISRFSACYYFCHFLVVLPLIGKYEKPLPLPNEL.

A helical membrane pass occupies residues 45–65; that stretch reads LGSIAGIALVIQIITGVILAM. 2 residues coordinate heme b: H95 and H109. The next 8 helical transmembrane spans lie at 97–117, 129–149, 164–184, 192–212, 245–265, 304–324, 335–355, and 364–384; these read VGASMFFATIYLHIARGLYYG, IGIIIFLIMMATAFMGYVLPW, FSAIPLIGEPIVIWLCGGFSV, FFSLHYLFPFIIVALVILHLL, FVGFGVYFIIFAYFIFYEPNY, LAGVFLMFGSIFVLFLLPWLD, PIYRIAFWIFMADCLFLGYLG, and IIISRFSACYYFCHFLVVLPL. Residues H196 and H210 each contribute to the heme b site.

It belongs to the cytochrome b family. In terms of assembly, the main subunits of complex b-c1 are: cytochrome b, cytochrome c1 and the Rieske protein. It depends on heme b as a cofactor.

It localises to the cell membrane. Functionally, component of the ubiquinol-cytochrome c reductase complex (complex III or cytochrome b-c1 complex), which is a respiratory chain that generates an electrochemical potential coupled to ATP synthesis. The chain is Cytochrome b (petB) from Rickettsia typhi (strain ATCC VR-144 / Wilmington).